A 427-amino-acid chain; its full sequence is Glutamate-1-semialdehyde 2,1-aminomutase (427 aa).

Position 265 is an N6-(pyridoxal phosphate)lysine (Lys-265).

Belongs to the class-III pyridoxal-phosphate-dependent aminotransferase family. HemL subfamily. As to quaternary structure, homodimer. Pyridoxal 5'-phosphate serves as cofactor.

The protein resides in the cytoplasm. The catalysed reaction is (S)-4-amino-5-oxopentanoate = 5-aminolevulinate. The protein operates within porphyrin-containing compound metabolism; protoporphyrin-IX biosynthesis; 5-aminolevulinate from L-glutamyl-tRNA(Glu): step 2/2. This Burkholderia lata (strain ATCC 17760 / DSM 23089 / LMG 22485 / NCIMB 9086 / R18194 / 383) protein is Glutamate-1-semialdehyde 2,1-aminomutase.